Reading from the N-terminus, the 73-residue chain is Large ribosomal subunit protein bL31 (73 aa).

This sequence belongs to the bacterial ribosomal protein bL31 family. Type A subfamily. Part of the 50S ribosomal subunit.

Binds the 23S rRNA. This is Large ribosomal subunit protein bL31 from Allorhizobium ampelinum (strain ATCC BAA-846 / DSM 112012 / S4) (Agrobacterium vitis (strain S4)).